Here is a 180-residue protein sequence, read N- to C-terminus: Alkyl hydroperoxide reductase AhpD (180 aa).

The active-site Proton donor is the C131. A disulfide bridge links C131 with C134. Catalysis depends on C134, which acts as the Cysteine sulfenic acid (-SOH) intermediate.

It belongs to the AhpD family.

It catalyses the reaction N(6)-[(R)-dihydrolipoyl]-L-lysyl-[lipoyl-carrier protein] + a hydroperoxide = N(6)-[(R)-lipoyl]-L-lysyl-[lipoyl-carrier protein] + an alcohol + H2O. Antioxidant protein with alkyl hydroperoxidase activity. Required for the reduction of the AhpC active site cysteine residues and for the regeneration of the AhpC enzyme activity. The protein is Alkyl hydroperoxide reductase AhpD of Hyphomonas neptunium (strain ATCC 15444).